Consider the following 409-residue polypeptide: F-box/kelch-repeat protein At1g48625 (409 aa).

The 48-residue stretch at 2–49 (ATMISNLPRDLMEEILSRVPLKSMRAVRLTCKNWHTLSITISESLAKM) folds into the F-box domain. Kelch repeat units lie at residues 169 to 218 (FIDY…LKGN) and 221 to 266 (WCAR…ILSC).

The polypeptide is F-box/kelch-repeat protein At1g48625 (Arabidopsis thaliana (Mouse-ear cress)).